The following is a 105-amino-acid chain: Large ribosomal subunit protein uL24 (105 aa).

It belongs to the universal ribosomal protein uL24 family. Part of the 50S ribosomal subunit.

Its function is as follows. One of two assembly initiator proteins, it binds directly to the 5'-end of the 23S rRNA, where it nucleates assembly of the 50S subunit. In terms of biological role, one of the proteins that surrounds the polypeptide exit tunnel on the outside of the subunit. The protein is Large ribosomal subunit protein uL24 of Xylella fastidiosa (strain M23).